A 517-amino-acid polypeptide reads, in one-letter code: L-amino-acid oxidase (517 aa).

The N-terminal stretch at 1–18 (MNVFFMFSLLFLAALESC) is a signal peptide. Cys29 and Cys192 are joined by a disulfide. Residues 62-63 (MA), 82-83 (EA), Arg90, and 106-109 (GPMR) contribute to the FAD site. Arg109 contributes to the substrate binding site. A glycan (N-linked (GlcNAc...) asparagine) is linked at Asn191. Val280 is a binding site for FAD. A disulfide bridge links Cys350 with Cys431. Asn380 carries N-linked (GlcNAc...) asparagine glycosylation. Tyr391 is a substrate binding site. Residues Glu476 and 483 to 488 (GWLDST) contribute to the FAD site. Substrate is bound at residue 483-484 (GW).

The protein belongs to the flavin monoamine oxidase family. FIG1 subfamily. As to quaternary structure, homodimer; non-covalently linked. It depends on FAD as a cofactor. N-glycosylated. In terms of tissue distribution, expressed by the venom gland.

Its subcellular location is the secreted. It carries out the reaction an L-alpha-amino acid + O2 + H2O = a 2-oxocarboxylate + H2O2 + NH4(+). Its function is as follows. Catalyzes an oxidative deamination of predominantly hydrophobic and aromatic L-amino acids, thus producing hydrogen peroxide that may contribute to the diverse toxic effects of this enzyme. Exhibits diverse biological activities, such as hemorrhage, hemolysis, edema, apoptosis of vascular endothelial cells or tumor cell lines, antibacterial and antiparasitic activities, as well as regulation of platelet aggregation. Effects of snake L-amino oxidases on platelets are controversial, since they either induce aggregation or inhibit agonist-induced aggregation. These different effects are probably due to different experimental conditions. The chain is L-amino-acid oxidase from Notechis scutatus scutatus (Mainland tiger snake).